A 404-amino-acid chain; its full sequence is Pyrophosphate--fructose 6-phosphate 1-phosphotransferase (404 aa).

Gly13 provides a ligand contact to diphosphate. Asn108 contacts Mg(2+). Residues Thr136–Asp138, Met180–Arg182, Glu237, and Tyr295–Arg298 contribute to the substrate site. The Proton acceptor role is filled by Asp138.

Belongs to the phosphofructokinase type A (PFKA) family. PPi-dependent PFK group II subfamily. Clade 'B2' sub-subfamily. As to quaternary structure, homodimer. Requires Mg(2+) as cofactor.

The protein resides in the cytoplasm. The catalysed reaction is beta-D-fructose 6-phosphate + diphosphate = beta-D-fructose 1,6-bisphosphate + phosphate + H(+). Its pathway is carbohydrate degradation; glycolysis; D-glyceraldehyde 3-phosphate and glycerone phosphate from D-glucose: step 3/4. With respect to regulation, non-allosteric. Its function is as follows. Catalyzes the phosphorylation of D-fructose 6-phosphate, the first committing step of glycolysis. Uses inorganic phosphate (PPi) as phosphoryl donor instead of ATP like common ATP-dependent phosphofructokinases (ATP-PFKs), which renders the reaction reversible, and can thus function both in glycolysis and gluconeogenesis. Consistently, PPi-PFK can replace the enzymes of both the forward (ATP-PFK) and reverse (fructose-bisphosphatase (FBPase)) reactions. In Rhodospirillum rubrum (strain ATCC 11170 / ATH 1.1.1 / DSM 467 / LMG 4362 / NCIMB 8255 / S1), this protein is Pyrophosphate--fructose 6-phosphate 1-phosphotransferase.